A 906-amino-acid polypeptide reads, in one-letter code: MLSILKKLFGTANDRTVKKLFSEITKINSLEPAIQKLSDEELKNKTVEFKEKLKNGATLDDIVYEAFAVVREAAKRVCGMRHFDVQLIGGLILHRGMITEMRTGEGKTLVATLPAYLNALTGKGVHVVTVNDYLARRDSASMGKIYNFLGLSVGCIVGGMPDEVKRAAYNADITHATNNELGFDYLRDNMKYSLQERVLRPFNFAIIDEVDSILIDEARTPLVISGPVNDNAELYGKIDKIVRLLNASDFEKDEKLKTINLTETGITHIESLLSKESIIKPDTSLYDFENLTLVHYVNQALRAHNMFTVNVDYLVREGKVMIIDEFTGRVMEGRRYSEGLHQALEAKENVKIQNENQTLASITFQNYFRNYPKLSGMTGTAMTEAPELKDIYNLDVVAVPTHNKVTRLDLDDEIYGSKKEKYDAILKLIRDCYDRGQPILVGTISIEKSEELSSVLNKEKIPHKVLNAKFHEQEAFIIAQAGRFKAVTIATNMAGRGTDIMLGGNPEMLIEQLDKAHNYEAKVAEIKAQIAEEKKQVIEAGGLFVIGTERHESRRIDNQLRGRSGRQGDPGKTKFFLSLDDDLMRIFASDRISGVLRTLGLKDGEAIHHPMISRSLEKAQQKVEGHNYEMRKNLLRFDDVMNDQRKIIYEQRTEIIKSKDSHGFLNSTTEELAQKIVLTFMPVGSYREDWDIENLSVELHRVFSIKFDHNVVSKNDVTEEEITKTVIQMAHDIYKSKEEAYSSELMHNAVKYILLTTLDQVWKDHLYSLDHLRQGISLRAYGQKDPLSEYKREAFNLFEQMLNNLKELFIQTVYHFHIDLKNVQKEDVSLEYKKLQKNMRESREDPAFSKYNAGSSIETDLKPVVSRIDPKDRNPDDPTSWGRVSRNELCPCGSGKKYKYCHGANE.

Residues glutamine 86, 104–108 (GEGKT), and aspartate 499 each bind ATP. Residues 862 to 886 (KPVVSRIDPKDRNPDDPTSWGRVSR) are disordered. Residues cysteine 890, cysteine 892, cysteine 901, and histidine 902 each coordinate Zn(2+).

The protein belongs to the SecA family. Monomer and homodimer. Part of the essential Sec protein translocation apparatus which comprises SecA, SecYEG and auxiliary proteins SecDF-YajC and YidC. Zn(2+) is required as a cofactor.

Its subcellular location is the cell inner membrane. It localises to the cytoplasm. It carries out the reaction ATP + H2O + cellular proteinSide 1 = ADP + phosphate + cellular proteinSide 2.. Its function is as follows. Part of the Sec protein translocase complex. Interacts with the SecYEG preprotein conducting channel. Has a central role in coupling the hydrolysis of ATP to the transfer of proteins into and across the cell membrane, serving both as a receptor for the preprotein-SecB complex and as an ATP-driven molecular motor driving the stepwise translocation of polypeptide chains across the membrane. The polypeptide is Protein translocase subunit SecA (Rickettsia africae (strain ESF-5)).